The following is a 102-amino-acid chain: Large ribosomal subunit protein bL21 (102 aa).

The protein belongs to the bacterial ribosomal protein bL21 family. In terms of assembly, part of the 50S ribosomal subunit. Contacts protein L20.

Functionally, this protein binds to 23S rRNA in the presence of protein L20. This chain is Large ribosomal subunit protein bL21, found in Geobacter sulfurreducens (strain ATCC 51573 / DSM 12127 / PCA).